The primary structure comprises 344 residues: Holliday junction branch migration complex subunit RuvB (344 aa).

Residues 1 to 182 (MRIELLNTPV…FGISNRFDYY (182 aa)) are large ATPase domain (RuvB-L). ATP is bound by residues isoleucine 21, arginine 22, glycine 63, lysine 66, threonine 67, threonine 68, 129 to 131 (EDF), arginine 172, tyrosine 182, and arginine 219. A Mg(2+)-binding site is contributed by threonine 67. The segment at 183–253 (PPELLETILM…TAMKTLDSLE (71 aa)) is small ATPAse domain (RuvB-S). The head domain (RuvB-H) stretch occupies residues 256-344 (EEGLDEMDKK…GTLFDGQEHV (89 aa)). Positions 311 and 316 each coordinate DNA.

Belongs to the RuvB family. As to quaternary structure, homohexamer. Forms an RuvA(8)-RuvB(12)-Holliday junction (HJ) complex. HJ DNA is sandwiched between 2 RuvA tetramers; dsDNA enters through RuvA and exits via RuvB. An RuvB hexamer assembles on each DNA strand where it exits the tetramer. Each RuvB hexamer is contacted by two RuvA subunits (via domain III) on 2 adjacent RuvB subunits; this complex drives branch migration. In the full resolvosome a probable DNA-RuvA(4)-RuvB(12)-RuvC(2) complex forms which resolves the HJ.

The protein localises to the cytoplasm. It carries out the reaction ATP + H2O = ADP + phosphate + H(+). Functionally, the RuvA-RuvB-RuvC complex processes Holliday junction (HJ) DNA during genetic recombination and DNA repair, while the RuvA-RuvB complex plays an important role in the rescue of blocked DNA replication forks via replication fork reversal (RFR). RuvA specifically binds to HJ cruciform DNA, conferring on it an open structure. The RuvB hexamer acts as an ATP-dependent pump, pulling dsDNA into and through the RuvAB complex. RuvB forms 2 homohexamers on either side of HJ DNA bound by 1 or 2 RuvA tetramers; 4 subunits per hexamer contact DNA at a time. Coordinated motions by a converter formed by DNA-disengaged RuvB subunits stimulates ATP hydrolysis and nucleotide exchange. Immobilization of the converter enables RuvB to convert the ATP-contained energy into a lever motion, pulling 2 nucleotides of DNA out of the RuvA tetramer per ATP hydrolyzed, thus driving DNA branch migration. The RuvB motors rotate together with the DNA substrate, which together with the progressing nucleotide cycle form the mechanistic basis for DNA recombination by continuous HJ branch migration. Branch migration allows RuvC to scan DNA until it finds its consensus sequence, where it cleaves and resolves cruciform DNA. The polypeptide is Holliday junction branch migration complex subunit RuvB (Chlorobium luteolum (strain DSM 273 / BCRC 81028 / 2530) (Pelodictyon luteolum)).